The following is a 76-amino-acid chain: Esculentin-2MT2 (76 aa).

The signal sequence occupies residues 1-22 (MFTLKKSMLLLFFLGTISLSLC). Positions 23-37 (EEERSADEDDGEKEV) are cleaved as a propeptide — removed in mature form. An intrachain disulfide couples C70 to C76.

The protein belongs to the frog skin active peptide (FSAP) family. Esculentin subfamily. Expressed by the skin glands.

It localises to the secreted. Antimicrobial peptide. Active against a variety of Gram-negative and Gram-positive bacterial strains. Active against fungi. Shows strong hemolytic activity against human erythrocytes. The chain is Esculentin-2MT2 from Amolops mantzorum (Sichuan torrent frog).